A 605-amino-acid chain; its full sequence is Alpha-1,3-galactosidase A (605 aa).

An N-terminal signal peptide occupies residues 1 to 20 (MKKYLHILPACFLFYAAAHA). 6 PbH1 repeats span residues 256 to 278 (SKNITLSRLQMHYMHGLGIVSQY), 312 to 334 (KGKVIIDSCYFAGAQDDPVNVHG), 421 to 443 (TPEVEIRNCYFTRTSTRGTLVTT), 444 to 466 (PRKVVIENNTYYKTGMSAILIEA), 477 to 507 (VKDVLIKGNTFIDCAYNGGPGHAVIAIHPSN), and 517 to 547 (HQNIRIEDNTFRTFDYPVLYAKSTAGLLFRN).

The protein belongs to the glycosyl hydrolase 110 family. A subfamily.

It catalyses the reaction Hydrolysis of terminal, non-reducing branched (1-&gt;3)-alpha-D-galactosidic residues, producing free D-galactose.. The catalysed reaction is Hydrolysis of terminal, non-reducing alpha-D-galactose residues in alpha-D-galactosides, including galactose oligosaccharides, galactomannans and galactolipids.. Its function is as follows. Alpha-galactosidase that specifically removes branched alpha-1,3-linked galactose residues present in blood group B antigens. Has no activity toward linear alpha-1,3-linked galactose residues. The chain is Alpha-1,3-galactosidase A (glaA) from Bacteroides fragilis (strain ATCC 25285 / DSM 2151 / CCUG 4856 / JCM 11019 / LMG 10263 / NCTC 9343 / Onslow / VPI 2553 / EN-2).